Reading from the N-terminus, the 402-residue chain is N-acetyltransferase Eis (402 aa).

Positions 3-154 constitute an N-acetyltransferase domain; the sequence is VTLCSPTEDD…RFARFHADAP (152 aa). Residues 85 to 87, 93 to 98, and 121 to 122 contribute to the acetyl-CoA site; these read VAV, RRGLLR, and SE. Catalysis depends on Y126, which acts as the Proton donor. F402 serves as the catalytic Proton acceptor; via carboxylate.

Belongs to the acetyltransferase Eis family. As to quaternary structure, homohexamer; trimer of dimers.

It is found in the secreted. Its subcellular location is the host cytoplasmic vesicle. The protein localises to the host phagosome. It localises to the extracellular vesicle. The protein resides in the bacterial extracellular vesicle. It is found in the host extracellular space. It carries out the reaction L-lysyl-[protein] + acetyl-CoA = N(6)-acetyl-L-lysyl-[protein] + CoA + H(+). Effector that is released into the host cell and affects host immune responses. Acts as an acetyltransferase that acetylates lysine residues of host proteins. This Mycobacterium bovis (strain BCG / Pasteur 1173P2) protein is N-acetyltransferase Eis.